Consider the following 388-residue polypeptide: Leucine aminopeptidase 1 (388 aa).

Residues 1–19 (MKVLTAIALSAIAFTGAVA) form the signal peptide. A propeptide spanning residues 20 to 88 (AVITQEAFLN…YPTLHSASYV (69 aa)) is cleaved from the precursor. N-linked (GlcNAc...) asparagine glycans are attached at residues Asn-106 and Asn-180. Zn(2+)-binding residues include His-188 and Asp-207. Asn-232 carries an N-linked (GlcNAc...) asparagine glycan. 2 residues coordinate Zn(2+): Glu-246 and Asp-273. Cys-322 and Cys-326 are oxidised to a cystine. His-355 is a binding site for Zn(2+).

Belongs to the peptidase M28 family. M28E subfamily. In terms of assembly, monomer. Requires Zn(2+) as cofactor.

It localises to the secreted. Extracellular aminopeptidase that allows assimilation of proteinaceous substrates and which contributes to pathogenicity. In Aspergillus fumigatus (strain CBS 144.89 / FGSC A1163 / CEA10) (Neosartorya fumigata), this protein is Leucine aminopeptidase 1 (lap1).